The sequence spans 297 residues: MTPNNNVMFDDASVMWIDADYIYQNSKMPLSTFQQLLFSIPSKHRKMINDIGNPACNPPSCSFPPSNSTVKYMVDIYGAAVLALRCPSLFSDQLLTTFTANNYLSYCNRQRPCPQPPCPQPPFDCAQTQILDALEKLARQSDLVVNSLNQISLNQSNQFLELSNTLNTVRAQNAQILAALETTKDAILTRLNALVDDIKAALPDQSAQLQELADKLLDAINSVAQTLRGEMNNTNSILTNLASSITNINSTLNNLLAAIEGIGGDGGGLGDADRQALNEVLSLVTEIRNILMGTARK.

The protein belongs to the baculoviridae PE family.

It localises to the virion membrane. In terms of biological role, major component of the polyhedra envelope. In Orgyia pseudotsugata (Douglas-fir tussock moth), this protein is Polyhedral envelope protein.